The chain runs to 710 residues: DNA ligase (710 aa).

Residues 53–57 (DAEYD), 102–103 (SL), and glutamate 136 contribute to the NAD(+) site. Lysine 138 acts as the N6-AMP-lysine intermediate in catalysis. NAD(+) contacts are provided by arginine 159, glutamate 196, lysine 312, and lysine 336. Residues cysteine 429, cysteine 432, cysteine 453, and cysteine 459 each coordinate Zn(2+). Residues 633 to 710 (ETSSPVAGKT…DEDQWIELAG (78 aa)) enclose the BRCT domain.

This sequence belongs to the NAD-dependent DNA ligase family. LigA subfamily. Mg(2+) is required as a cofactor. Mn(2+) serves as cofactor.

It catalyses the reaction NAD(+) + (deoxyribonucleotide)n-3'-hydroxyl + 5'-phospho-(deoxyribonucleotide)m = (deoxyribonucleotide)n+m + AMP + beta-nicotinamide D-nucleotide.. Its function is as follows. DNA ligase that catalyzes the formation of phosphodiester linkages between 5'-phosphoryl and 3'-hydroxyl groups in double-stranded DNA using NAD as a coenzyme and as the energy source for the reaction. It is essential for DNA replication and repair of damaged DNA. This Parvibaculum lavamentivorans (strain DS-1 / DSM 13023 / NCIMB 13966) protein is DNA ligase.